Consider the following 804-residue polypeptide: Pentatricopeptide repeat-containing protein At4g35130, chloroplastic (804 aa).

The N-terminal 19 residues, 1–19 (MAATLLSQCYRIYNSDACK), are a transit peptide targeting the chloroplast. 16 PPR repeats span residues 63–93 (NDPALTRALRGFADSRLMEDALQLFDEMNKA), 94–128 (DAFLWNVMIKGFTSCGLYIEAVQFYSRMVFAGVKA), 129–163 (DTFTYPFVIKSVAGISSLEEGKKIHAMVIKLGFVS), 164–194 (DVYVCNSLISLYMKLGCAWDAEKVFEEMPER), 195–229 (DIVSWNSMISGYLALGDGFSSLMLFKEMLKCGFKP), 230–264 (DRFSTMSALGACSHVYSPKMGKEIHCHAVRSRIET), 266–296 (DVMVMTSILDMYSKYGEVSYAERIFNGMIQR), 297–332 (NIVAWNVMIGCYARNGRVTDAFLCFQKMSEQNGLQP), 333–363 (DVITSINLLPASAILEGRTIHGYAMRRGFLP), 364–394 (HMVLETALIDMYGECGQLKSAEVIFDRMAEK), 395–429 (NVISWNSIIAAYVQNGKNYSALELFQELWDSSLVP), 430–464 (DSTTIASILPAYAESLSLSEGREIHAYIVKSRYWS), 465–495 (NTIILNSLVHMYAMCGDLEDARKCFNHILLK), 496–530 (DVVSWNSIIMAYAVHGFGRISVWLFSEMIASRVNP), 531–561 (NKSTFASLLAACSISGMVDEGWEYFESMKRE), and 567–597 (GIEHYGCMLDLIGRTGNFSAAKRFLEEMPFV). Residues 602–677 (IWGSLLNASR…TSSRSTVEAK (76 aa)) form a type E motif region. A type E(+) motif region spans residues 678 to 708 (GKSHVFTNGDRSHVATNKIYEVLDVVSRMVG). The type DYW motif stretch occupies residues 710–804 (EDIYVHCVSR…NGRCSCGNYW (95 aa)).

The protein belongs to the PPR family. PCMP-H subfamily.

The protein localises to the plastid. It localises to the chloroplast. In Arabidopsis thaliana (Mouse-ear cress), this protein is Pentatricopeptide repeat-containing protein At4g35130, chloroplastic (PCMP-H27).